The following is a 301-amino-acid chain: F-actin-capping protein subunit beta (301 aa).

Ser-31 is modified (phosphoserine). N6-acetyllysine is present on Lys-264.

It belongs to the F-actin-capping protein beta subunit family. In terms of assembly, component of the F-actin capping complex, composed of a heterodimer of an alpha and a beta subunit. Subunit of dynactin, a multiprotein complex part of a tripartite complex with dynein and a adapter, such as BICDL1, BICD2 or HOOK3. The dynactin complex is built around ACTR1A/ACTB filament and consists of an actin-related filament composed of a shoulder domain, a pointed end and a barbed end. Its length is defined by its flexible shoulder domain. The soulder is composed of 2 DCTN1 subunits, 4 DCTN2 and 2 DCTN3. The 4 DCNT2 (via N-terminus) bind the ACTR1A filament and act as molecular rulers to determine the length. The pointed end is important for binding dynein-dynactin cargo adapters. Consists of 4 subunits: ACTR10, DCNT4, DCTN5 and DCTN6. The barbed end is composed of a CAPZA1:CAPZB heterodimers, which binds ACTR1A/ACTB filament and dynactin and stabilizes dynactin. Interacts with ARHGAP17. Interaction with RCSD1/CAPZIP. Component of the WASH complex, composed of F-actin-capping protein subunit alpha (CAPZA1, CAPZA2 or CAPZA3), F-actin-capping protein subunit beta (CAPZB), WASH (WASHC1, WASH2P, WASH3P, WASH4P, WASH5P or WASH6P), WASHC2 (WASHC2A or WASHC2C), WASHC3, WASHC4 and WASHC5. Interacts with ACTG1. Directly interacts with CRACD; this interaction decreases binding to actin. In terms of tissue distribution, the isoform beta-3 is predominantly expressed in the testis. It is only detected in total sperm, sperm heads and the calyx fraction, but not in sperm tails or any supernatant fraction. Weaker expression also found in brain.

It localises to the cytoplasm. Its subcellular location is the cytoskeleton. The protein resides in the perinuclear theca. The protein localises to the calyx. In terms of biological role, F-actin-capping proteins bind in a Ca(2+)-independent manner to the fast growing ends of actin filaments (barbed end) thereby blocking the exchange of subunits at these ends. Unlike other capping proteins (such as gelsolin and severin), these proteins do not sever actin filaments. Plays a role in the regulation of cell morphology and cytoskeletal organization. Forms, with CAPZB, the barbed end of the fast growing ends of actin filaments in the dynactin complex and stabilizes dynactin structure. The dynactin multiprotein complex activates the molecular motor dynein for ultra-processive transport along microtubules. The polypeptide is F-actin-capping protein subunit beta (CAPZB) (Bos taurus (Bovine)).